Reading from the N-terminus, the 388-residue chain is Dual specificity mitogen-activated protein kinase kinase 1 (388 aa).

The segment at 1–20 is disordered; the sequence is PIQLNPAPDGSAVNGTSSAE. Residues 61–356 enclose the Protein kinase domain; that stretch reads FEKISELGAG…LKQLMIHAFI (296 aa). ATP is bound by residues 67–75 and K90; that span reads LGAGNGGVV. The active-site Proton acceptor is D183. Phosphoserine; by RAF occurs at positions 211 and 215. A disordered region spans residues 275–299; sequence DSPVTETSPRQRAPGRPMSSYGSDS.

It belongs to the protein kinase superfamily. STE Ser/Thr protein kinase family. MAP kinase kinase subfamily. MAPKK is itself dependent on Ser/Thr phosphorylation for activity catalyzed by MAP kinase kinase kinases (RAF or MEKK1).

The protein localises to the cytoplasm. It localises to the cytoskeleton. It is found in the microtubule organizing center. Its subcellular location is the centrosome. The protein resides in the spindle pole body. The protein localises to the nucleus. The enzyme catalyses L-seryl-[protein] + ATP = O-phospho-L-seryl-[protein] + ADP + H(+). The catalysed reaction is L-threonyl-[protein] + ATP = O-phospho-L-threonyl-[protein] + ADP + H(+). It carries out the reaction L-tyrosyl-[protein] + ATP = O-phospho-L-tyrosyl-[protein] + ADP + H(+). Functionally, dual specificity protein kinase which acts as an essential component of the MAP kinase signal transduction pathway. Binding of extracellular ligands such as growth factors, cytokines and hormones to their cell-surface receptors activates RAS and this initiates RAF1 activation. RAF1 then further activates the dual-specificity protein kinases MAP2K1/MEK1 and MAP2K2/MEK2. Both MAP2K1/MEK1 and MAP2K2/MEK2 function specifically in the MAPK/ERK cascade, and catalyze the concomitant phosphorylation of a threonine and a tyrosine residue in a Thr-Glu-Tyr sequence located in the extracellular signal-regulated kinases MAPK3/ERK1 and MAPK1/ERK2, leading to their activation and further transduction of the signal within the MAPK/ERK cascade. Depending on the cellular context, this pathway mediates diverse biological functions such as cell growth, adhesion, survival and differentiation predominantly through the regulation of transcription, metabolism and cytoskeletal rearrangements. The sequence is that of Dual specificity mitogen-activated protein kinase kinase 1 (MAP2K1) from Serinus canaria (Island canary).